The following is a 901-amino-acid chain: Core protein VP3 (901 aa).

It belongs to the orbivirus VP3 family.

It is found in the virion. Functionally, the VP3 protein is one of the five proteins (with VP1, VP4, VP6 and VP7) which form the inner capsid of the virus. The sequence is that of Core protein VP3 (Segment-3) from Antilocapra americana (Pronghorn).